A 357-amino-acid chain; its full sequence is Arginine kinase Scy p 2.0101 (357 aa).

In terms of domain architecture, Phosphagen kinase N-terminal spans 9–91; that stretch reads KLEEGFKKLE…FDPIIEDYHK (83 aa). An L-arginine-binding site is contributed by 64–68; sequence GVGVY. IgE-binding and beta-hexosaminidase release from rat basophilic leukemia (RBL) cells regions lie at residues 113 to 127 and 127 to 155; these read VDPDGKFVISTRVRC and CGRSMEGYPFNPCLTEAQYKEMESKVSST. The region spanning 119–356 is the Phosphagen kinase C-terminal domain; it reads FVISTRVRCG…LELIKIEKEM (238 aa). Residue 122–126 coordinates ATP; the sequence is STRVR. His185 is a binding site for ATP. A disulfide bridge links Cys201 with Cys271. The igE-binding and beta-hexosaminidase release from rat basophilic leukemia (RBL) cells stretch occupies residues 204 to 218; it reads WPTGRGIYHNDNKTF. The segment at 211–225 is igE-binding, but no beta-hexosaminidase release from rat basophilic leukemia (RBL) cells; sequence YHNDNKTFLVWCNEE. Glu225 lines the L-arginine pocket. Residue Arg229 participates in ATP binding. Cys271 contributes to the L-arginine binding site. Residues 280–284 and 309–314 contribute to the ATP site; these read RASVH and RGTRGE. An L-arginine-binding site is contributed by Glu314. The interval 316–330 is igE-binding, but no beta-hexosaminidase release from rat basophilic leukemia (RBL) cells; it reads TEAEGGVYDISNKRR.

This sequence belongs to the ATP:guanido phosphotransferase family. In terms of processing, glycosylated. In terms of tissue distribution, muscle (at protein level).

It catalyses the reaction L-arginine + ATP = N(omega)-phospho-L-arginine + ADP + H(+). In terms of biological role, catalyzes the reversible transfer of high energy ATP gamma-phosphate group to L-arginine. In Scylla paramamosain (Mud crab), this protein is Arginine kinase Scy p 2.0101.